Reading from the N-terminus, the 489-residue chain is Ataxin-10 homolog (489 aa).

Belongs to the ataxin-10 family.

It is found in the cytoplasm. Its function is as follows. May play a role in the regulation of cytokinesis. The chain is Ataxin-10 homolog (CTR86) from Debaryomyces hansenii (strain ATCC 36239 / CBS 767 / BCRC 21394 / JCM 1990 / NBRC 0083 / IGC 2968) (Yeast).